A 184-amino-acid chain; its full sequence is UPF0179 protein Pcal_2106 (184 aa).

Positions 146 to 161 are enriched in low complexity; that stretch reads GASSAGISQAPSRVPL. The segment at 146 to 184 is disordered; the sequence is GASSAGISQAPSRVPLSKPPSKSPSPQKSSPRGPTSRLP.

This sequence belongs to the UPF0179 family.

The sequence is that of UPF0179 protein Pcal_2106 from Pyrobaculum calidifontis (strain DSM 21063 / JCM 11548 / VA1).